A 1935-amino-acid polypeptide reads, in one-letter code: Myosin-7 (1935 aa).

One can recognise a Myosin N-terminal SH3-like domain in the interval 32–81 (DLKKDVYVPDDKEEFVKAKILSREGGKVTAETEHGKTVTVKEDQVLQQNP). Positions 85-778 (DKIEDMAMLT…LLGLLEEMRD (694 aa)) constitute a Myosin motor domain. An N6,N6,N6-trimethyllysine modification is found at lysine 129. Position 178-185 (178-185 (GESGAGKT)) interacts with ATP. Threonine 378 carries the post-translational modification Phosphothreonine. 2 actin-binding regions span residues 655–677 (LNKLMTNLRSTHPHFVRCIIPNE) and 757–771 (KFGHTKVFFKAGLLG). The IQ domain occupies 781 to 810 (LSRIITRIQAQSRGVLSRMEFKKLLERRDS). The stretch at 839–1935 (LLKSAETEKE…DIGTKGLNEE (1097 aa)) forms a coiled coil. Residues serine 1137 and serine 1269 each carry the phosphoserine modification. Position 1282 is a phosphothreonine (threonine 1282). A Phosphotyrosine modification is found at tyrosine 1308. Position 1309 is a phosphothreonine (threonine 1309). At serine 1510 the chain carries Phosphoserine. Threonine 1513 carries the phosphothreonine modification. Residues 1907-1935 (EERADIAESQVNKLRAKSRDIGTKGLNEE) are disordered. Residues 1923–1935 (KSRDIGTKGLNEE) show a composition bias toward basic and acidic residues.

The protein belongs to the TRAFAC class myosin-kinesin ATPase superfamily. Myosin family. As to quaternary structure, muscle myosin is a hexameric protein that consists of 2 heavy chain subunits (MHC), 2 alkali light chain subunits (MLC) and 2 regulatory light chain subunits (MLC-2). Interacts with ECPAS. Interacts (via C-terminus) with LRRC39.

The protein localises to the cytoplasm. The protein resides in the myofibril. Its subcellular location is the sarcomere. Its function is as follows. Myosins are actin-based motor molecules with ATPase activity essential for muscle contraction. Forms regular bipolar thick filaments that, together with actin thin filaments, constitute the fundamental contractile unit of skeletal and cardiac muscle. This chain is Myosin-7 (MYH7), found in Sus scrofa (Pig).